Here is a 741-residue protein sequence, read N- to C-terminus: Moderate conductance mechanosensitive channel YbiO (741 aa).

The N-terminal stretch at 1-18 is a signal peptide; it reads MRWILFILFCLLGAPAHA. Positions 22–42 are disordered; the sequence is PGVTTTTTTDSTTEPAPEPDI. The span at 25 to 34 shows a compositional bias: low complexity; sequence TTTTTTDSTT. The next 11 membrane-spanning stretches (helical) occupy residues 143–163, 185–205, 225–245, 268–288, 294–314, 343–363, 372–392, 432–452, 466–486, 509–529, and 533–553; these read MLAVLVFGFYWLIRLCALPLY, AMIIGAFIIDLLLLALTLFVG, LFLNAFALIEFFKAVLRLIFC, LSWLSSLIGYGLIVAVPIISN, IGALANVIIMLCMTVWALYLI, FALVWHWLASAYFIVLFFFSL, FMMGATVRSLAIIGIAAFVSG, ILTVCVAVMLLLSAWGLFDFW, ILIRIALILFFSAVGWTVLAS, LLTLFRNALAVIISTITIMIV, and IGVNIAPLLAGAGALGLAISF.

This sequence belongs to the MscS (TC 1.A.23) family. As to quaternary structure, homoheptamer.

It localises to the cell inner membrane. Its function is as follows. Mechanosensitive channel that protects cells against hypoosmotic stress when highly overexpressed. The sequence is that of Moderate conductance mechanosensitive channel YbiO (ybiO) from Escherichia coli (strain K12).